Here is a 422-residue protein sequence, read N- to C-terminus: Elongation factor 1-alpha (422 aa).

Residues 5 to 221 (KPHQNLAVIG…NDLPEPQPPT (217 aa)) enclose the tr-type G domain. A G1 region spans residues 14–21 (GHVDHGKS). Position 14–21 (14–21 (GHVDHGKS)) interacts with GTP. Serine 21 provides a ligand contact to Mg(2+). A G2 region spans residues 70–74 (GVTID). The G3 stretch occupies residues 91-94 (DCPG). Residues 91-95 (DCPGH) and 146-149 (NKMD) each bind GTP. The G4 stretch occupies residues 146–149 (NKMD). Residues 185 to 187 (SAF) are G5.

The protein belongs to the TRAFAC class translation factor GTPase superfamily. Classic translation factor GTPase family. EF-Tu/EF-1A subfamily.

Its subcellular location is the cytoplasm. It carries out the reaction GTP + H2O = GDP + phosphate + H(+). Its function is as follows. GTP hydrolase that promotes the GTP-dependent binding of aminoacyl-tRNA to the A-site of ribosomes during protein biosynthesis. This is Elongation factor 1-alpha from Natronomonas pharaonis (strain ATCC 35678 / DSM 2160 / CIP 103997 / JCM 8858 / NBRC 14720 / NCIMB 2260 / Gabara) (Halobacterium pharaonis).